The sequence spans 71 residues: Ceratotoxin-D (71 aa).

The signal sequence occupies residues 1 to 23; it reads MANLKAVFLICILAFIAFHCVVG. A propeptide spanning residues 24-35 is cleaved from the precursor; sequence APTAEDSIVVKR.

As to quaternary structure, homomer of four to six subunits.

It is found in the secreted. In terms of biological role, female-specific peptides with potent activity against Gram-positive and Gram-negative bacteria. They have as well hemolytic activity. In Ceratitis capitata (Mediterranean fruit fly), this protein is Ceratotoxin-D (CTXD).